The primary structure comprises 332 residues: Cysteine and histidine-rich domain-containing protein 1 (332 aa).

A2 is modified (N-acetylalanine). The interaction with PPP5C stretch occupies residues 2–77; that stretch reads ALLCYNRACG…KPPEPVKPEV (76 aa). Zn(2+) is bound by residues C5, C10, C24, H27, C42, and C43. CHORD domains lie at 5–64 and 157–216; these read CYNR…KGRH and CKNG…KGRH. Phosphothreonine is present on T47. S51 is modified (phosphoserine). C59, H64, C157, C162, C176, H179, C194, C195, C211, and H216 together coordinate Zn(2+). Residues 62–82 form a disordered region; sequence GRHNSEKPPEPVKPEVKTTEK. A compositionally biased stretch (basic and acidic residues) spans 64 to 82; sequence HNSEKPPEPVKPEVKTTEK. The interaction with HSP90AA1 and HSP90AB1 stretch occupies residues 65–316; the sequence is NSEKPPEPVK…AEPMQWASLE (252 aa). The 90-residue stretch at 227–316 folds into the CS domain; the sequence is VVPCRHDWHQ…AEPMQWASLE (90 aa).

Interacts with HSP90AA1, HSP90AB1, PPP5C, ROCK1 and ROCK2.

Its function is as follows. Regulates centrosome duplication, probably by inhibiting the kinase activity of ROCK2. Proposed to act as co-chaperone for HSP90. May play a role in the regulation of NOD1 via a HSP90 chaperone complex. In vitro, has intrinsic chaperone activity. This function may be achieved by inhibiting association of ROCK2 with NPM1. Plays a role in ensuring the localization of the tyrosine kinase receptor EGFR to the plasma membrane, and thus ensures the subsequent regulation of EGFR activity and EGF-induced actin cytoskeleton remodeling. Involved in stress response. Prevents tumorigenesis. The protein is Cysteine and histidine-rich domain-containing protein 1 (CHORDC1) of Macaca fascicularis (Crab-eating macaque).